The sequence spans 553 residues: Solute carrier family 22 member 12 (553 aa).

A helical membrane pass occupies residues 10–30 (VGGLGRFQLFQTVALVTPILW). Asn-56 carries N-linked (GlcNAc...) asparagine glycosylation. Helical transmembrane passes span 146–166 (PMAQ…CGHA), 182–202 (LVSV…YCLF), 204–224 (FLLA…LMEW), 232–252 (LVMT…GSVA), 260–280 (MLQL…WWLP), 351–371 (IISM…ALDL), 378–398 (IFLL…GSLL), 412–432 (FLVL…GMGV), 435–455 (SALA…ITIF), 466–486 (MTAV…GPLV), and 495–515 (WMPL…ALLL). Ser-534 is subject to Phosphoserine. Position 542 is a phosphothreonine (Thr-542).

Belongs to the major facilitator (TC 2.A.1) superfamily. Organic cation transporter (TC 2.A.1.19) family. As to quaternary structure, interacts with PDZK1. Post-translationally, N-glycosylated. As to expression, detected in kidney (at protein level). Detected in kidney cortex, in proximal tubules.

Its subcellular location is the apical cell membrane. It catalyses the reaction urate(out) + (S)-lactate(in) = urate(in) + (S)-lactate(out). The catalysed reaction is nicotinate(in) + urate(out) = nicotinate(out) + urate(in). The enzyme catalyses urate(out) + n chloride(in) = urate(in) + n chloride(out). It carries out the reaction orotate(out) + nicotinate(in) = orotate(in) + nicotinate(out). Electroneutral antiporter that translocates urate across the apical membrane of proximal tubular cells in exchange for monovalent organic or inorganic anions. Involved in renal reabsorption of urate and helps maintaining blood levels of uric acid. Mediates urate uptake by an exchange with organic anions such as (S)-lactate and nicotinate, and inorganic anion Cl(-). Other inorganic anions such as Br(-), I(-) and NO3(-) may also act as counteranions that exchange for urate. Also mediates orotate tubular uptake coupled with nicotinate efflux and to a lesser extent with lactate efflux, therefore displaying a potential role in orotate renal reabsorption. Orotate transport is Cl(-)-dependent. The polypeptide is Solute carrier family 22 member 12 (Mus musculus (Mouse)).